The chain runs to 306 residues: NAD-dependent protein deacylase (306 aa).

One can recognise a Deacetylase sirtuin-type domain in the interval M1–D305. G23–W42 serves as a coordination point for NAD(+). Substrate is bound by residues Y67 and R70. Q103–D106 provides a ligand contact to NAD(+). The active-site Proton acceptor is the H123. Residues C131, C136, C200, and C203 each contribute to the Zn(2+) site. NAD(+) contacts are provided by residues G243 to S245, N269 to D271, and A291.

The protein belongs to the sirtuin family. Class III subfamily. Zn(2+) is required as a cofactor.

The protein resides in the mitochondrion. The catalysed reaction is N(6)-malonyl-L-lysyl-[protein] + NAD(+) + H2O = 2''-O-malonyl-ADP-D-ribose + nicotinamide + L-lysyl-[protein]. The enzyme catalyses N(6)-succinyl-L-lysyl-[protein] + NAD(+) + H2O = 2''-O-succinyl-ADP-D-ribose + nicotinamide + L-lysyl-[protein]. It carries out the reaction N(6)-glutaryl-L-lysyl-[protein] + NAD(+) + H2O = 2''-O-glutaryl-ADP-D-ribose + nicotinamide + L-lysyl-[protein]. Its function is as follows. NAD-dependent lysine demalonylase, desuccinylase and deglutarylase that specifically removes malonyl, succinyl and glutaryl groups on target proteins. Has weak NAD-dependent protein deacetylase activity; however this activity may not be physiologically relevant in vivo. This is NAD-dependent protein deacylase from Candida albicans (strain SC5314 / ATCC MYA-2876) (Yeast).